A 28-amino-acid chain; its full sequence is Mast cell degranulating peptide (28 aa).

2 disulfide bridges follow: cysteine 2–cysteine 18 and cysteine 4–cysteine 22.

As to expression, expressed by the venom gland.

It localises to the secreted. Functionally, mast cell degranulating peptide. The sequence is that of Mast cell degranulating peptide from Bombus pensylvanicus (American bumblebee).